Consider the following 898-residue polypeptide: Alanine--tRNA ligase (898 aa).

The Zn(2+) site is built by H582, H586, C685, and H689.

Belongs to the class-II aminoacyl-tRNA synthetase family. Zn(2+) is required as a cofactor.

The protein resides in the cytoplasm. The enzyme catalyses tRNA(Ala) + L-alanine + ATP = L-alanyl-tRNA(Ala) + AMP + diphosphate. Catalyzes the attachment of alanine to tRNA(Ala) in a two-step reaction: alanine is first activated by ATP to form Ala-AMP and then transferred to the acceptor end of tRNA(Ala). Also edits incorrectly charged Ser-tRNA(Ala) and Gly-tRNA(Ala) via its editing domain. This is Alanine--tRNA ligase from Mycolicibacterium vanbaalenii (strain DSM 7251 / JCM 13017 / BCRC 16820 / KCTC 9966 / NRRL B-24157 / PYR-1) (Mycobacterium vanbaalenii).